Here is a 304-residue protein sequence, read N- to C-terminus: Capsid protein (304 aa).

2 stretches are compositionally biased toward basic and acidic residues: residues 1–24 (MGDS…REAR) and 32–54 (FEGK…EMSL). A disordered region spans residues 1 to 54 (MGDSTKKAETAKDEGTSQERREARPLPTAADFEGKDTSENTDGRAADADGEMSL).

Belongs to the potexviruses coat protein family.

The protein localises to the virion. In terms of biological role, required for genome encapsidation. Forms ribonucleoprotein complexes along with TGB1 helicase and viral RNA. The protein is Capsid protein of Potato virus M (strain Russian) (PVM).